The chain runs to 96 residues: Putative septation protein SpoVG (96 aa).

The protein belongs to the SpoVG family.

In terms of biological role, could be involved in septation. In Oceanobacillus iheyensis (strain DSM 14371 / CIP 107618 / JCM 11309 / KCTC 3954 / HTE831), this protein is Putative septation protein SpoVG.